The following is a 321-amino-acid chain: Cytochrome c biogenesis protein CcsA (321 aa).

Transmembrane regions (helical) follow at residues H12–Y32, M45–S62, L71–I91, L98–L117, M143–I163, V227–N247, E260–R277, and V292–I312.

It belongs to the CcmF/CycK/Ccl1/NrfE/CcsA family. In terms of assembly, may interact with Ccs1.

The protein resides in the plastid. It is found in the chloroplast thylakoid membrane. Its function is as follows. Required during biogenesis of c-type cytochromes (cytochrome c6 and cytochrome f) at the step of heme attachment. This chain is Cytochrome c biogenesis protein CcsA, found in Phalaenopsis aphrodite subsp. formosana (Moth orchid).